The primary structure comprises 143 residues: Peptide methionine sulfoxide reductase MsrB (143 aa).

The MsrB domain maps to Asp16–Arg139. Zn(2+)-binding residues include Cys55, Cys58, Cys104, and Cys107. Cys128 acts as the Nucleophile in catalysis.

Belongs to the MsrB Met sulfoxide reductase family. Requires Zn(2+) as cofactor.

The catalysed reaction is L-methionyl-[protein] + [thioredoxin]-disulfide + H2O = L-methionyl-(R)-S-oxide-[protein] + [thioredoxin]-dithiol. This chain is Peptide methionine sulfoxide reductase MsrB, found in Burkholderia cenocepacia (strain ATCC BAA-245 / DSM 16553 / LMG 16656 / NCTC 13227 / J2315 / CF5610) (Burkholderia cepacia (strain J2315)).